Here is a 128-residue protein sequence, read N- to C-terminus: Ribosome-binding factor A (128 aa).

The protein belongs to the RbfA family. As to quaternary structure, monomer. Binds 30S ribosomal subunits, but not 50S ribosomal subunits or 70S ribosomes.

The protein localises to the cytoplasm. Its function is as follows. One of several proteins that assist in the late maturation steps of the functional core of the 30S ribosomal subunit. Associates with free 30S ribosomal subunits (but not with 30S subunits that are part of 70S ribosomes or polysomes). Required for efficient processing of 16S rRNA. May interact with the 5'-terminal helix region of 16S rRNA. The sequence is that of Ribosome-binding factor A from Haemophilus influenzae (strain ATCC 51907 / DSM 11121 / KW20 / Rd).